The primary structure comprises 1758 residues: Y' element ATP-dependent helicase YIL177C (1758 aa).

Positions 668–845 (EIYMADTPSV…LQRIGLTGLA (178 aa)) constitute a Helicase ATP-binding domain. An ATP-binding site is contributed by 681–688 (APPGYGKT). The region spanning 900–1051 (ALKLLLALFE…EFYGLESKKG (152 aa)) is the Helicase C-terminal domain. The segment covering 1142–1360 (NVRTNATTNA…ATTTESTNAS (219 aa)) has biased composition (low complexity). The disordered stretch occupies residues 1142-1384 (NVRTNATTNA…RFHPVTDINK (243 aa)). The span at 1361-1384 (AKEDANKDGNAEDNRFHPVTDINK) shows a compositional bias: basic and acidic residues.

It belongs to the helicase family. Yeast subtelomeric Y' repeat subfamily.

Its function is as follows. Catalyzes DNA unwinding and is involved in telomerase-independent telomere maintenance. In Saccharomyces cerevisiae (strain ATCC 204508 / S288c) (Baker's yeast), this protein is Y' element ATP-dependent helicase YIL177C.